The chain runs to 319 residues: tRNA uridine(34) hydroxylase (319 aa).

Positions 127–221 (KQEDTVIIDA…YGKDPEVQGE (95 aa)) constitute a Rhodanese domain. Cys-181 functions as the Cysteine persulfide intermediate in the catalytic mechanism.

This sequence belongs to the TrhO family.

It catalyses the reaction uridine(34) in tRNA + AH2 + O2 = 5-hydroxyuridine(34) in tRNA + A + H2O. Its function is as follows. Catalyzes oxygen-dependent 5-hydroxyuridine (ho5U) modification at position 34 in tRNAs. This chain is tRNA uridine(34) hydroxylase, found in Bacillus cereus (strain ATCC 10987 / NRS 248).